We begin with the raw amino-acid sequence, 666 residues long: E3 ubiquitin-protein ligase MBR2 (666 aa).

Polar residues-rich tracts occupy residues 1 to 14, 23 to 35, 42 to 58, and 73 to 88; these read MQGPRSTGDSSTGI, CSTNSETTSNNIL, FPNNTTGSGRPTYASSS, and SSSRLGPSDHLNSNGS. 6 disordered regions span residues 1–58, 73–95, 155–179, 221–329, 400–433, and 457–491; these read MQGP…ASSS, SSSRLGPSDHLNSNGSKTDRQLL, SLGSSSQTAEERSSGPGSSLGGLGS, SSLS…DGQP, NPSTSGDSPFVPRAGSSSGIHGLQPNPTWVTPHN, and GASLPLLPTGPSVSSNEAAAPSGSSSRSHRSRQRR. Residues 221–239 are compositionally biased toward low complexity; that stretch reads SSLSLSMPSQNSPNVNNQS. 3 stretches are compositionally biased toward polar residues: residues 258 to 268, 286 to 303, and 414 to 433; these read AFPSTRSTETI, FSFTQSGSSVRQQQQLPA, and GSSSGIHGLQPNPTWVTPHN. The RING-type; atypical zinc-finger motif lies at 619 to 660; it reads CCVCQEEYAEGDDLGTLGCGHEFHTACVKQWLMLKNLCPICK.

The protein belongs to the RING-type zinc finger family. In terms of assembly, interacts with MED25 and UBC11.

The enzyme catalyses S-ubiquitinyl-[E2 ubiquitin-conjugating enzyme]-L-cysteine + [acceptor protein]-L-lysine = [E2 ubiquitin-conjugating enzyme]-L-cysteine + N(6)-ubiquitinyl-[acceptor protein]-L-lysine.. It functions in the pathway protein modification; protein ubiquitination. In terms of biological role, E3 ubiquitin-protein ligase that functions as a regulator of MED25 stability by targeting MED25 for degradation in a RING-H2-dependent way. Proteasome-dependent degradation of MED25 seems to activate its function as positive regulator of FLOWERING LOCUS T (FT) and is important to induce the expression of FT and consequently to promote flowering. May function downstream of HAL3 and be required for HAL3-regulated plant growth. Activation of MBR2 by HAL3 may lead to the degradation of cell cycle suppressors, resulting in enhancement of cell division and plant growth. The protein is E3 ubiquitin-protein ligase MBR2 (MBR2) of Arabidopsis thaliana (Mouse-ear cress).